A 279-amino-acid chain; its full sequence is NH(3)-dependent NAD(+) synthetase (279 aa).

ATP is bound at residue 40–47; sequence GLSGGIDS. Mg(2+) is bound at residue aspartate 46. Position 122 (arginine 122) interacts with deamido-NAD(+). Residue threonine 142 participates in ATP binding. Glutamate 147 provides a ligand contact to Mg(2+). Deamido-NAD(+)-binding residues include lysine 155 and aspartate 162. ATP contacts are provided by lysine 171 and serine 193. 253-254 is a deamido-NAD(+) binding site; that stretch reads HK.

Belongs to the NAD synthetase family. In terms of assembly, homodimer.

The catalysed reaction is deamido-NAD(+) + NH4(+) + ATP = AMP + diphosphate + NAD(+) + H(+). Its pathway is cofactor biosynthesis; NAD(+) biosynthesis; NAD(+) from deamido-NAD(+) (ammonia route): step 1/1. In terms of biological role, catalyzes the ATP-dependent amidation of deamido-NAD to form NAD. Uses ammonia as a nitrogen source. The polypeptide is NH(3)-dependent NAD(+) synthetase (Sulfurisphaera tokodaii (strain DSM 16993 / JCM 10545 / NBRC 100140 / 7) (Sulfolobus tokodaii)).